The primary structure comprises 224 residues: Ribonuclease T (224 aa).

One can recognise an Exonuclease domain in the interval 32-206; sequence VVVDVETGGF…YDTEKTAELF (175 aa). Mg(2+) contacts are provided by aspartate 35, glutamate 37, histidine 193, and aspartate 198. The active-site Proton donor/acceptor is histidine 193.

It belongs to the RNase T family. As to quaternary structure, homodimer. Requires Mg(2+) as cofactor.

Trims short 3' overhangs of a variety of RNA species, leaving a one or two nucleotide 3' overhang. Responsible for the end-turnover of tRNA: specifically removes the terminal AMP residue from uncharged tRNA (tRNA-C-C-A). Also appears to be involved in tRNA biosynthesis. The polypeptide is Ribonuclease T (Pseudomonas fluorescens (strain Pf0-1)).